A 546-amino-acid chain; its full sequence is NAD(P)H-quinone oxidoreductase chain 4 (546 aa).

14 consecutive transmembrane segments (helical) span residues 24–44, 56–76, 108–128, 132–152, 156–176, 188–208, 232–252, 263–283, 297–317, 326–346, 352–372, 396–416, 437–457, and 484–504; these read FPWL…IPFF, FALS…INGF, MPLI…AWPV, PKLF…VFAV, LLFF…LAIW, FIIY…AMGF, ILCY…VPLH, TAPV…YALL, FSPL…LTSF, IAYS…SFSS, AMLQ…LVGA, FALW…SGFV, VIMA…LLSM, and IYII…PRLV.

The protein belongs to the complex I subunit 4 family.

The protein resides in the cellular thylakoid membrane. It carries out the reaction a plastoquinone + NADH + (n+1) H(+)(in) = a plastoquinol + NAD(+) + n H(+)(out). The catalysed reaction is a plastoquinone + NADPH + (n+1) H(+)(in) = a plastoquinol + NADP(+) + n H(+)(out). In terms of biological role, NDH-1 shuttles electrons from NAD(P)H, via FMN and iron-sulfur (Fe-S) centers, to quinones in the respiratory chain. The immediate electron acceptor for the enzyme in this species is believed to be plastoquinone. Couples the redox reaction to proton translocation (for every two electrons transferred, four hydrogen ions are translocated across the cytoplasmic membrane), and thus conserves the redox energy in a proton gradient. The polypeptide is NAD(P)H-quinone oxidoreductase chain 4 (Prochlorococcus marinus subsp. pastoris (strain CCMP1986 / NIES-2087 / MED4)).